The following is a 649-amino-acid chain: Mitochondrial Rho GTPase 1 (649 aa).

The Cytoplasmic portion of the chain corresponds to 1-623 (MTKETIRVVI…KPTNIDYSSA (623 aa)). In terms of domain architecture, Miro 1 spans 3 to 176 (KETIRVVICG…FYLCQRSISY (174 aa)). Residues 12-19 (GDDGVGKT), 61-63 (DTD), and 115-118 (NKCD) each bind GTP. EF-hand domains follow at residues 192–227 (SAVA…CFGK) and 320–355 (KGYR…TPGL). Residues Asp-205, Asp-207, Asp-209, Glu-216, Asp-333, Asp-335, Asp-337, and Glu-344 each coordinate Ca(2+). The 166-residue stretch at 436-601 (RKVFNCFVVG…FKKIIQASLE (166 aa)) folds into the Miro 2 domain. GTP contacts are provided by residues 445 to 452 (GKRNSGKS), 481 to 485 (EVTGD), and 550 to 553 (LKAD). A helical; Anchor for type IV membrane protein transmembrane segment spans residues 624–644 (VILGSSIGFLALFSYTMIKLL). The Mitochondrial intermembrane portion of the chain corresponds to 645–649 (KPTQQ).

The protein belongs to the mitochondrial Rho GTPase family.

It is found in the mitochondrion outer membrane. In terms of biological role, mitochondrial GTPase involved in mitochondrial trafficking. Probably involved in control of anterograde transport of mitochondria and their subcellular distribution. The protein is Mitochondrial Rho GTPase 1 (GEM1) of Candida glabrata (strain ATCC 2001 / BCRC 20586 / JCM 3761 / NBRC 0622 / NRRL Y-65 / CBS 138) (Yeast).